The following is a 163-amino-acid chain: Putative 4-hydroxy-4-methyl-2-oxoglutarate aldolase (163 aa).

Substrate is bound by residues 76-79 (GDMI) and arginine 98. Aspartate 99 serves as a coordination point for a divalent metal cation.

Belongs to the class II aldolase/RraA-like family. In terms of assembly, homotrimer. Requires a divalent metal cation as cofactor.

It carries out the reaction 4-hydroxy-4-methyl-2-oxoglutarate = 2 pyruvate. The catalysed reaction is oxaloacetate + H(+) = pyruvate + CO2. Catalyzes the aldol cleavage of 4-hydroxy-4-methyl-2-oxoglutarate (HMG) into 2 molecules of pyruvate. Also contains a secondary oxaloacetate (OAA) decarboxylase activity due to the common pyruvate enolate transition state formed following C-C bond cleavage in the retro-aldol and decarboxylation reactions. The chain is Putative 4-hydroxy-4-methyl-2-oxoglutarate aldolase from Pseudomonas fluorescens.